The chain runs to 448 residues: Senescence/dehydration-associated protein At4g35985, chloroplastic (448 aa).

Residues 1 to 36 (MECSATPPKLYPTVDTSTTVAPLPKSSSSSSSTNNN) are disordered. Residues 1–56 (MECSATPPKLYPTVDTSTTVAPLPKSSSSSSSTNNNNLYPSINVNDLVNNIFPDPT) constitute a chloroplast transit peptide. Over residues 26 to 36 (SSSSSSSTNNN) the composition is skewed to low complexity. The Senescence domain maps to 248–416 (IAAGSGQLIK…AWTVFKIRQA (169 aa)). The disordered stretch occupies residues 422 to 448 (AMKPSSLAKTVVKTAAKERKKGKKSSK). The span at 439 to 448 (ERKKGKKSSK) shows a compositional bias: basic residues.

Expressed in leaves (especially in midribs and trichomes), apical meristemic regions, stems, roots and flowers.

It is found in the plastid. The protein resides in the chloroplast. This chain is Senescence/dehydration-associated protein At4g35985, chloroplastic, found in Arabidopsis thaliana (Mouse-ear cress).